The chain runs to 336 residues: UDP-3-O-acylglucosamine N-acyltransferase (336 aa).

H233 functions as the Proton acceptor in the catalytic mechanism.

This sequence belongs to the transferase hexapeptide repeat family. LpxD subfamily. Homotrimer.

It catalyses the reaction a UDP-3-O-[(3R)-3-hydroxyacyl]-alpha-D-glucosamine + a (3R)-hydroxyacyl-[ACP] = a UDP-2-N,3-O-bis[(3R)-3-hydroxyacyl]-alpha-D-glucosamine + holo-[ACP] + H(+). The protein operates within bacterial outer membrane biogenesis; LPS lipid A biosynthesis. Its function is as follows. Catalyzes the N-acylation of UDP-3-O-acylglucosamine using 3-hydroxyacyl-ACP as the acyl donor. Is involved in the biosynthesis of lipid A, a phosphorylated glycolipid that anchors the lipopolysaccharide to the outer membrane of the cell. The polypeptide is UDP-3-O-acylglucosamine N-acyltransferase (Helicobacter pylori (strain HPAG1)).